The primary structure comprises 463 residues: Asparagine--tRNA ligase (463 aa).

The protein belongs to the class-II aminoacyl-tRNA synthetase family. As to quaternary structure, homodimer.

Its subcellular location is the cytoplasm. The enzyme catalyses tRNA(Asn) + L-asparagine + ATP = L-asparaginyl-tRNA(Asn) + AMP + diphosphate + H(+). The sequence is that of Asparagine--tRNA ligase from Desulfitobacterium hafniense (strain Y51).